Here is a 132-residue protein sequence, read N- to C-terminus: Small ribosomal subunit protein uS8 (132 aa).

This sequence belongs to the universal ribosomal protein uS8 family. Part of the 30S ribosomal subunit. Contacts proteins S5 and S12.

Functionally, one of the primary rRNA binding proteins, it binds directly to 16S rRNA central domain where it helps coordinate assembly of the platform of the 30S subunit. The polypeptide is Small ribosomal subunit protein uS8 (Brucella ovis (strain ATCC 25840 / 63/290 / NCTC 10512)).